The sequence spans 101 residues: NADH-quinone oxidoreductase subunit K (101 aa).

3 helical membrane-spanning segments follow: residues 4 to 24 (LSHYLTVAAILFTLGVLGIFI), 30 to 50 (IVILMCVELILLAVNINLVAF), and 65 to 85 (FVLTVAAAEAAIGLAILVVFF).

Belongs to the complex I subunit 4L family. NDH-1 is composed of 14 different subunits. Subunits NuoA, H, J, K, L, M, N constitute the membrane sector of the complex.

The protein localises to the cell inner membrane. It catalyses the reaction a quinone + NADH + 5 H(+)(in) = a quinol + NAD(+) + 4 H(+)(out). NDH-1 shuttles electrons from NADH, via FMN and iron-sulfur (Fe-S) centers, to quinones in the respiratory chain. The immediate electron acceptor for the enzyme in this species is believed to be ubiquinone. Couples the redox reaction to proton translocation (for every two electrons transferred, four hydrogen ions are translocated across the cytoplasmic membrane), and thus conserves the redox energy in a proton gradient. The chain is NADH-quinone oxidoreductase subunit K from Methylobacterium sp. (strain 4-46).